The primary structure comprises 255 residues: uncharacterized protein (255 aa).

Residues 1 to 23 (MKRLNTLVLYISFLILIISIVAG) form the signal peptide. Cys24 carries N-palmitoyl cysteine lipidation. Cys24 carries S-diacylglycerol cysteine lipidation.

Belongs to the staphylococcal tandem lipoprotein family.

It is found in the cell membrane. This is an uncharacterized protein from Staphylococcus aureus (strain N315).